Reading from the N-terminus, the 273-residue chain is Secretory carrier-associated membrane protein 6 (273 aa).

Residues 1-69 (MHHDPNPFDE…MGDSKSKARE (69 aa)) are disordered. Over 1–131 (MHHDPNPFDE…LQKLQYLAFA (131 aa)) the chain is Cytoplasmic. A compositionally biased stretch (gly residues) spans 20-30 (NGGGGGGGGGS). The stretch at 68–94 (RELSSWETDLKRREADIKRREEALRNA) forms a coiled coil. Helical transmembrane passes span 132–152 (SWLG…VCWI), 159–179 (LFFL…LIWY), 194–214 (FGWF…AAIA), and 239–259 (IIGI…LLSI). At 260-273 (GVLQRVYMYFRGNK) the chain is on the cytoplasmic side.

It belongs to the SCAMP family.

It is found in the cell membrane. Its subcellular location is the cytoplasmic vesicle. It localises to the secretory vesicle membrane. In terms of biological role, probably involved in membrane trafficking. The polypeptide is Secretory carrier-associated membrane protein 6 (SCAMP6) (Oryza sativa subsp. japonica (Rice)).